A 182-amino-acid polypeptide reads, in one-letter code: Cbp/p300-interacting transactivator 4 (182 aa).

Residues 22–129 (GPHAPRTLQP…PPPPPPALGC (108 aa)) are disordered. Polar residues predominate over residues 64–89 (SPVSFQPFPVSQSPGAGSTHLQSAAT). Positions 100–117 (AAAGGPSPLQPAPGAAAS) are enriched in low complexity.

This sequence belongs to the CITED family. Interacts via its C-terminal region with the CH1 domain of CREBBP and EP300. Interacts with all TFAP2/AP-2 isoforms. As to expression, strongly expressed in heart, spleen and testis, and weakly in liver and kidney.

It is found in the nucleus. It localises to the cytoplasm. In terms of biological role, acts as a transcriptional coactivator for TFAP2/AP-2. Enhances estrogen-dependent transactivation mediated by estrogen receptors. May function as an inhibitor of transactivation by HIF1A by disrupting HIF1A interaction with CREBBP. May be involved in regulation of gene expression during development and differentiation of blood cells, endothelial cells and mammary epithelial cells. This Mus musculus (Mouse) protein is Cbp/p300-interacting transactivator 4.